A 239-amino-acid polypeptide reads, in one-letter code: Proteasome activator complex subunit 2 (239 aa).

Position 2 is an N-acetylalanine (Ala2). Ser10 carries the phosphoserine modification. Residues 65–86 (DIPIPDPPPKDDEMETDKQEKK) form a disordered region. The span at 72-86 (PPKDDEMETDKQEKK) shows a compositional bias: basic and acidic residues.

Belongs to the PA28 family. In terms of assembly, heterodimer of PSME1 and PSME2, which forms a hexameric ring.

Functionally, implicated in immunoproteasome assembly and required for efficient antigen processing. The PA28 activator complex enhances the generation of class I binding peptides by altering the cleavage pattern of the proteasome. The polypeptide is Proteasome activator complex subunit 2 (PSME2) (Sus scrofa (Pig)).